Reading from the N-terminus, the 454-residue chain is N-acetyl-S-(2-succino)cysteine lyase (454 aa).

Fumarate is bound at residue 106–107; the sequence is TT. Histidine 154 functions as the Proton donor/acceptor in the catalytic mechanism. A fumarate-binding site is contributed by arginine 233. The Proton donor/acceptor role is filled by serine 277. Fumarate-binding positions include threonine 278 and 283–285; that span reads KRN.

The protein belongs to the lyase 1 family.

It catalyses the reaction N-acetyl-S-(2-succino)-L-cysteine = N-acetyl-L-cysteine + fumarate. Its pathway is amino-acid biosynthesis; L-cysteine biosynthesis. Catalyzes the cleavage of N-acetyl-S-(2-succino)cysteine into fumarate and N-acetylcysteine. Is involved in a S-(2-succino)cysteine (2SC) degradation pathway that allows the bacterium to recover cysteine from 2SC and to detoxify 2SC that may be a toxic metabolite. Can also perform the reverse reaction in vitro, and has minor activity against 2SC and other small molecule thiols. This chain is N-acetyl-S-(2-succino)cysteine lyase, found in Dickeya dadantii (strain 3937) (Erwinia chrysanthemi (strain 3937)).